The chain runs to 314 residues: Small ribosomal subunit protein uS2c (314 aa).

The protein belongs to the universal ribosomal protein uS2 family.

It is found in the plastid. It localises to the chloroplast. In Stigeoclonium helveticum (Green alga), this protein is Small ribosomal subunit protein uS2c (rps2).